A 267-amino-acid chain; its full sequence is NAD kinase 2 (267 aa).

Asp-52 serves as the catalytic Proton acceptor. NAD(+) contacts are provided by residues 52 to 53, 124 to 125, Arg-151, Asp-153, 164 to 169, and Ala-188; these read DA, NE, and TAYNKS.

This sequence belongs to the NAD kinase family. A divalent metal cation is required as a cofactor.

The protein resides in the cytoplasm. It catalyses the reaction NAD(+) + ATP = ADP + NADP(+) + H(+). Involved in the regulation of the intracellular balance of NAD and NADP, and is a key enzyme in the biosynthesis of NADP. Catalyzes specifically the phosphorylation on 2'-hydroxyl of the adenosine moiety of NAD to yield NADP. The chain is NAD kinase 2 from Bacillus cereus (strain ATCC 14579 / DSM 31 / CCUG 7414 / JCM 2152 / NBRC 15305 / NCIMB 9373 / NCTC 2599 / NRRL B-3711).